We begin with the raw amino-acid sequence, 510 residues long: Maturase K (510 aa).

This sequence belongs to the intron maturase 2 family. MatK subfamily.

The protein resides in the plastid. It localises to the chloroplast. Functionally, usually encoded in the trnK tRNA gene intron. Probably assists in splicing its own and other chloroplast group II introns. This chain is Maturase K, found in Anomochloa marantoidea (Herbaceous bamboo).